Consider the following 268-residue polypeptide: UPF0328 protein ECU05_1640/ECU11_0090 (268 aa).

The protein belongs to the UPF0328 family.

The chain is UPF0328 protein ECU05_1640/ECU11_0090 from Encephalitozoon cuniculi (strain GB-M1) (Microsporidian parasite).